Consider the following 225-residue polypeptide: Transmembrane emp24 domain-containing protein p24delta11 (225 aa).

A signal peptide spans 1–35 (MDLLPSRYKIHKTKLRWILTMMTMMMMMVMRRGES). At 36–193 (MRLDMESGNT…ELNRSTNSRM (158 aa)) the chain is on the lumenal side. In terms of domain architecture, GOLD spans 45 to 160 (TKCISDDIKT…ITMLEVEVRK (116 aa)). Residues 175–188 (LIEREREMQELNRS) are a coiled coil. R178 bears the Omega-N-methylated arginine mark. N186 carries N-linked (GlcNAc...) asparagine glycosylation. A helical transmembrane segment spans residues 194-210 (AALSLLSFVVTMSVAGL). Residues 211–225 (QLRHLKSFLERKKLL) lie on the Cytoplasmic side of the membrane. The short motif at 218-219 (FL) is the COPII vesicle coat-binding element. The COPI vesicle coat-binding motif lies at 218–225 (FLERKKLL).

It belongs to the EMP24/GP25L family. Probably oligomerizes with other members of the EMP24/GP25L family. Associates with the COPI vesicle coat (coatomer). Associates with the COPII vesicle coat (coatomer).

The protein resides in the endoplasmic reticulum membrane. The protein localises to the golgi apparatus. It is found in the cis-Golgi network membrane. Its subcellular location is the golgi stack membrane. Functionally, involved in vesicular protein trafficking. Mainly functions in the early secretory pathway. Thought to act as cargo receptor at the lumenal side for incorporation of secretory cargo molecules into transport vesicles and to be involved in vesicle coat formation at the cytoplasmic side. This is Transmembrane emp24 domain-containing protein p24delta11 from Arabidopsis thaliana (Mouse-ear cress).